A 499-amino-acid chain; its full sequence is Protein flp (499 aa).

The next 4 helical transmembrane spans lie at 6 to 26 (LYFL…IYIT), 389 to 409 (FNIV…FSAY), 433 to 453 (LTLC…YLIL), and 471 to 491 (LTLT…LLIL).

The protein resides in the cell membrane. Its function is as follows. Its precise function is unknown. Has no penicillin-binding activity and is not involved in methicillin resistance. The protein is Protein flp (flp) of Staphylococcus aureus (strain MRSA252).